A 241-amino-acid chain; its full sequence is MGRAFEVRKSSMAKTANAKTKVNSKYGKEIYVAAKNGEPDPDVNQTLRRLIEKAKKDQVPAHVIEKAIEKAAGGAGEDYSTARYEGYGPGNCMVIVDCLTDNPNRTIKDVRLPFTKTDSKIGTPGCVAHMFDHFAVLGFSGDDDEVVLEALMMADVDVTDVEVEDGKVSVFAPHTEYFKAKTALEEAFEGINFEVDEITFVPQVHIEITDEEVIANFDKFITMLEDCDDVQNIYHNAIIKN.

This sequence belongs to the TACO1 family.

It is found in the cytoplasm. This chain is Probable transcriptional regulatory protein PSHAb0060, found in Pseudoalteromonas translucida (strain TAC 125).